The following is a 119-amino-acid chain: Immunoglobulin heavy variable 2-5 (119 aa).

Positions 1–19 are cleaved as a signal peptide; that stretch reads MDTLCSTLLLLTIPSWVLS. Gln20 carries the pyrrolidone carboxylic acid modification. The framework-1 stretch occupies residues 20-44; the sequence is QITLKESGPTLVKPTQTLTLTCTFS. The 100-residue stretch at 20–119 folds into the Ig-like domain; sequence QITLKESGPT…DTATYYCAHR (100 aa). Cysteines 41 and 116 form a disulfide. The segment at 45–54 is complementarity-determining-1; it reads GFSLSTSGVG. Residues 55-71 are framework-2; sequence VGWIRQPPGKALEWLAL. A complementarity-determining-2 region spans residues 72–78; it reads IYWDDDK. The segment at 79 to 116 is framework-3; sequence RYSPSLKSRLTITKDTSKNQVVLTMTNMDPVDTATYYC. The tract at residues 117–119 is complementarity-determining-3; sequence AHR.

Immunoglobulins are composed of two identical heavy chains and two identical light chains; disulfide-linked.

It localises to the secreted. It is found in the cell membrane. Its function is as follows. V region of the variable domain of immunoglobulin heavy chains that participates in the antigen recognition. Immunoglobulins, also known as antibodies, are membrane-bound or secreted glycoproteins produced by B lymphocytes. In the recognition phase of humoral immunity, the membrane-bound immunoglobulins serve as receptors which, upon binding of a specific antigen, trigger the clonal expansion and differentiation of B lymphocytes into immunoglobulins-secreting plasma cells. Secreted immunoglobulins mediate the effector phase of humoral immunity, which results in the elimination of bound antigens. The antigen binding site is formed by the variable domain of one heavy chain, together with that of its associated light chain. Thus, each immunoglobulin has two antigen binding sites with remarkable affinity for a particular antigen. The variable domains are assembled by a process called V-(D)-J rearrangement and can then be subjected to somatic hypermutations which, after exposure to antigen and selection, allow affinity maturation for a particular antigen. In Homo sapiens (Human), this protein is Immunoglobulin heavy variable 2-5.